The chain runs to 485 residues: Probable cytosol aminopeptidase (485 aa).

2 residues coordinate Mn(2+): lysine 251 and aspartate 256. Residue lysine 263 is part of the active site. Mn(2+) is bound by residues aspartate 274, aspartate 333, and glutamate 335. The active site involves arginine 337.

It belongs to the peptidase M17 family. Mn(2+) serves as cofactor.

The protein resides in the cytoplasm. The catalysed reaction is Release of an N-terminal amino acid, Xaa-|-Yaa-, in which Xaa is preferably Leu, but may be other amino acids including Pro although not Arg or Lys, and Yaa may be Pro. Amino acid amides and methyl esters are also readily hydrolyzed, but rates on arylamides are exceedingly low.. The enzyme catalyses Release of an N-terminal amino acid, preferentially leucine, but not glutamic or aspartic acids.. Presumably involved in the processing and regular turnover of intracellular proteins. Catalyzes the removal of unsubstituted N-terminal amino acids from various peptides. The protein is Probable cytosol aminopeptidase of Brucella melitensis biotype 1 (strain ATCC 23456 / CCUG 17765 / NCTC 10094 / 16M).